We begin with the raw amino-acid sequence, 404 residues long: Sorting nexin-5 (404 aa).

An N-acetylalanine modification is found at Ala-2. In terms of domain architecture, PX spans 25 to 172 (LNVDPSLQID…HVFLEYDQDL (148 aa)). Residues 40–46 (SERDKVK), 99–105 (FDGPREK), and 113–116 (EGSM) contribute to the a 1,2-diacyl-sn-glycero-3-phospho-(1D-myo-inositol-4,5-bisphosphate) site. The interval 169 to 261 (DQDLSVRRKN…HSLALEEPTV (93 aa)) is interaction with DOCK1. Positions 183 to 200 (FGGFFKSVVKSADEVLFS) are membrane-binding amphipathic helix. Ser-193 is modified (phosphoserine). The BAR domain occupies 202–404 (VKEVDDFFEQ…QSCIDLFKNN (203 aa)). Lys-275 carries the post-translational modification N6-acetyllysine.

This sequence belongs to the sorting nexin family. Forms heterodimers with BAR domain-containing sorting nexins SNX1 and SNX2; does not homodimerize. The heterodimers are proposed to self-assemble into helical arrays on the membrane to stabilize and expand local membrane curvature underlying endosomal tubule formation. Thought to be a component of the originally described retromer complex (also called SNX-BAR retromer) which is a pentamer containing the heterotrimeric retromer cargo-selective complex (CSC), also described as vacuolar protein sorting subcomplex (VPS), and a heterodimeric membrane-deforming subcomplex formed between SNX1 or SNX2 and SNX5 or SNX6 (also called SNX-BAR subcomplex); the respective CSC and SNX-BAR subcomplexes associate with low affinity. Interacts with SNX1, SNX2, VPS26A, VPS29, VPS35, DCTN1, DOCK1, MIB1, PIP5K1C. Interacts with HGS; increased by PIP5K1C kinase activity and by PtdIns(3P) and/or PtdIns(3,4)P2.

Its subcellular location is the endosome. The protein resides in the early endosome. It is found in the early endosome membrane. It localises to the cell membrane. The protein localises to the cytoplasmic vesicle membrane. Its subcellular location is the cytoplasm. The protein resides in the cell projection. It is found in the phagocytic cup. It localises to the ruffle. Functionally, involved in several stages of intracellular trafficking. Interacts with membranes containing phosphatidylinositol lipids. Acts in part as component of the retromer membrane-deforming SNX-BAR subcomplex. The SNX-BAR retromer mediates retrograde transport of cargo proteins from endosomes to the trans-Golgi network (TGN) and is involved in endosome-to-plasma membrane transport for cargo protein recycling. The SNX-BAR subcomplex functions to deform the donor membrane into a tubular profile called endosome-to-TGN transport carrier (ETC). Does not have in vitro vesicle-to-membrane remodeling activity. Involved in retrograde transport of lysosomal enzyme receptor IGF2R. May function as link between endosomal transport vesicles and dynactin. Plays a role in the internalization of EGFR after EGF stimulation. Involved in EGFR endosomal sorting and degradation; the function involves PIP5K1C and is retromer-independent. Together with PIP5K1C facilitates HGS interaction with ubiquitinated EGFR, which initiates EGFR sorting to intraluminal vesicles (ILVs) of the multivesicular body for subsequent lysosomal degradation. Involved in E-cadherin sorting and degradation; inhibits PIP5K1C-mediated E-cadherin degradation. Plays a role in macropinocytosis. The polypeptide is Sorting nexin-5 (Snx5) (Rattus norvegicus (Rat)).